The primary structure comprises 179 residues: NADH dehydrogenase [ubiquinone] 1 beta subcomplex subunit 9 (179 aa).

The residue at position 2 (A2) is an N-acetylalanine. At S85 the chain carries Phosphoserine. Residues 136–162 form a disordered region; that stretch reads EVKQLQEETPPGGPLTEALPPARKEGD.

This sequence belongs to the complex I LYR family. As to quaternary structure, mammalian complex I is composed of 45 different subunits.

It localises to the mitochondrion inner membrane. Its function is as follows. Accessory subunit of the mitochondrial membrane respiratory chain NADH dehydrogenase (Complex I), that is believed to be not involved in catalysis. Complex I functions in the transfer of electrons from NADH to the respiratory chain. The immediate electron acceptor for the enzyme is believed to be ubiquinone. The protein is NADH dehydrogenase [ubiquinone] 1 beta subcomplex subunit 9 (NDUFB9) of Pan troglodytes (Chimpanzee).